The chain runs to 208 residues: MGEVEISALAYVKMCLHAARYPHAAVNGLFLAPAPRSGECLCLTDCVPLFHSHLALSVMLEVALNQVDVWGAQAGLVVAGYYHANAAVNDQSPGPLALKIAGRIAEFFPDAVLIMLDNQKLVPQPRVPPVIVLENQGLRWVPKDKNLVMWRDWEESRQMVGALLEDRAHQHLVDFDCHLDDIRQDWTNQRLNTQITQWVGPTNGNGNA.

Positions 4–139 constitute an MPN domain; sequence VEISALAYVK…VIVLENQGLR (136 aa).

Belongs to the EMC8/EMC9 family. As to quaternary structure, component of the ER membrane protein complex (EMC). EMC8 and EMC9 are mutually exclusive subunits of the EMC complex.

Its subcellular location is the endoplasmic reticulum membrane. Its function is as follows. Part of the endoplasmic reticulum membrane protein complex (EMC) that enables the energy-independent insertion into endoplasmic reticulum membranes of newly synthesized membrane proteins. Preferentially accommodates proteins with transmembrane domains that are weakly hydrophobic or contain destabilizing features such as charged and aromatic residues. Involved in the cotranslational insertion of multi-pass membrane proteins in which stop-transfer membrane-anchor sequences become ER membrane spanning helices. It is also required for the post-translational insertion of tail-anchored/TA proteins in endoplasmic reticulum membranes. By mediating the proper cotranslational insertion of N-terminal transmembrane domains in an N-exo topology, with translocated N-terminus in the lumen of the ER, controls the topology of multi-pass membrane proteins like the G protein-coupled receptors. By regulating the insertion of various proteins in membranes, it is indirectly involved in many cellular processes. This chain is ER membrane protein complex subunit 9 (EMC9), found in Homo sapiens (Human).